The following is a 429-amino-acid chain: Enolase (429 aa).

(2R)-2-phosphoglycerate is bound at residue Gln-162. Glu-204 (proton donor) is an active-site residue. Positions 241, 283, and 310 each coordinate Mg(2+). The (2R)-2-phosphoglycerate site is built by Lys-335, Arg-364, Ser-365, and Lys-386. Residue Lys-335 is the Proton acceptor of the active site.

The protein belongs to the enolase family. It depends on Mg(2+) as a cofactor.

It localises to the cytoplasm. The protein resides in the secreted. Its subcellular location is the cell surface. It carries out the reaction (2R)-2-phosphoglycerate = phosphoenolpyruvate + H2O. Its pathway is carbohydrate degradation; glycolysis; pyruvate from D-glyceraldehyde 3-phosphate: step 4/5. Catalyzes the reversible conversion of 2-phosphoglycerate (2-PG) into phosphoenolpyruvate (PEP). It is essential for the degradation of carbohydrates via glycolysis. This Mycobacterium bovis (strain BCG / Pasteur 1173P2) protein is Enolase.